Here is a 337-residue protein sequence, read N- to C-terminus: Fructose-1,6-bisphosphatase class 1 (337 aa).

Residues glutamate 94, aspartate 116, leucine 118, and aspartate 119 each contribute to the Mg(2+) site. Substrate is bound by residues 119–122 (DGSS), asparagine 210, and lysine 276. Glutamate 282 contacts Mg(2+).

It belongs to the FBPase class 1 family. Homotetramer. Mg(2+) serves as cofactor.

It is found in the cytoplasm. The enzyme catalyses beta-D-fructose 1,6-bisphosphate + H2O = beta-D-fructose 6-phosphate + phosphate. The protein operates within carbohydrate biosynthesis; gluconeogenesis. The sequence is that of Fructose-1,6-bisphosphatase class 1 from Burkholderia orbicola (strain MC0-3).